Here is a 128-residue protein sequence, read N- to C-terminus: UPF0325 protein CKO_03204 (128 aa).

This sequence belongs to the UPF0325 family.

This is UPF0325 protein CKO_03204 from Citrobacter koseri (strain ATCC BAA-895 / CDC 4225-83 / SGSC4696).